The sequence spans 780 residues: Heat shock protein 90-5, chloroplastic (780 aa).

A chloroplast-targeting transit peptide spans Met1–Lys60. ATP is bound by residues Glu106, Asn110, Asp152, Met157, Ser172–Gly173, Gln196–Phe201, Thr251, and Arg441. A disordered region spans residues Gly742–Asp780. Basic and acidic residues predominate over residues Ser769–Asp780.

It belongs to the heat shock protein 90 family. In terms of assembly, homodimer. Interacts with VIPP1. Interacts with P23-1. Expressed in roots, cotyledons, young leaves, mature leaves, stems, flowers, petals and siliques.

It is found in the plastid. The protein resides in the chloroplast stroma. In terms of biological role, molecular chaperone required for chloroplast biogenesis. Essential for chloroplast biogenesis and maintenance, and thus for embryogenesis. May be involved in the disassembly of VIPP1 for thylakoid membrane formation and/or maintenance. Cooperates with TIC components and other molecular chaperones to drive transport of preproteins into chloroplasts and functions in the chloroplast stroma to facilitate membrane translocation during protein import into the organelle. The chain is Heat shock protein 90-5, chloroplastic from Arabidopsis thaliana (Mouse-ear cress).